The chain runs to 211 residues: Dof zinc finger protein 5 (211 aa).

The disordered stretch occupies residues 37–101; sequence FVVAREKVEP…QRRLQDSAEA (65 aa). A compositionally biased stretch (basic and acidic residues) spans 68 to 80; that stretch reads IKREAADRDEEQR. The Dof-type zinc finger occupies 109–163; that stretch reads LPCPRCRSRDTKFCYFNNYNVNQPRHFCKACHRYWTAGGALRNVPVGAGRRKNRP. Zn(2+)-binding residues include C111, C114, C136, and C139. Residues 191–211 are disordered; sequence SPTSPSPVYTDRWPVTPDRPF.

The protein localises to the nucleus. Transcription factor that may transactivate seed storage protein genes in developing seeds. The polypeptide is Dof zinc finger protein 5 (Oryza sativa subsp. japonica (Rice)).